Here is a 264-residue protein sequence, read N- to C-terminus: MTLPTTIYSFPAYLSRFSSTDKPVKLKFHQYARATLLSNRGRDHNCDGRRTVEIHKLDLSDWQAFNKLATRCNAYDGITMNGDNSFGWNHEATLDNIHAQKYNKAYAGARLTAELKYLLQDVESFEPNSKYTIHEVVLGPGYGTPDYTGQTIGYVVTLPAQMPNCWSSELPTIDLYIDQLRTVTGVSNALGFIIAALLNAYSDLPHDLKIGLRSLSSSAAIYSGLGFERVPQERDISCARMYLTPANHPDLWTQENGEWIYLRN.

Residues 182 to 198 (TVTGVSNALGFIIAALL) traverse the membrane as a helical segment.

This sequence to E.coli YjiC.

The protein resides in the membrane. This is an uncharacterized protein from Escherichia coli (strain K12).